Reading from the N-terminus, the 1968-residue chain is Signal element on autosome protein 2 (1968 aa).

The segment covering 72 to 88 has biased composition (low complexity); sequence TSSSFSSSLATTTTTSS. 2 disordered regions span residues 72–252 and 271–364; these read TSSS…TPTQ and QVQQ…VQEQ. Basic residues predominate over residues 107 to 119; it reads SHHHPSSSHHHHP. Low complexity-rich tracts occupy residues 120–134, 144–165, 219–232, and 298–338; these read GQQQ…SHLQ, HPYY…YGQA, DQPS…LPPL, and LSSI…SSSS. Polar residues predominate over residues 346–362; that stretch reads PNASSSSLIKRQSQDVQ. The segment at 413–440 adopts a C2H2-type 1 zinc-finger fold; it reads YQCPNCNRNLANARNLQRHRQTCGSAQH. Disordered stretches follow at residues 451–499 and 538–601; these read RSPP…LYSP and WSRD…TLDP. Over residues 452–467 the composition is skewed to pro residues; it reads SPPPCASAPPVAPPTA. Residues 472–482 show a composition bias toward polar residues; the sequence is FQHHNSTGNLT. Over residues 483-498 the composition is skewed to low complexity; the sequence is LSYSSSSSRHQSSLYS. Basic and acidic residues predominate over residues 570 to 594; it reads PLHHLDSFDSADHRKETPRECHEPD. The segment at 651–672 adopts a C2H2-type 2; degenerate zinc-finger fold; sequence FTCEACKKSVSSERSLRRHYNT. 2 disordered regions span residues 681-712 and 785-854; these read AASG…GPEK and VTSA…TGNP. Residues 690–702 are compositionally biased toward basic residues; it reads TTKRKPATKRPSK. The span at 794–804 shows a compositional bias: low complexity; sequence HQLPHQQPQQQ. Residues 812-824 show a composition bias toward acidic residues; the sequence is LLNEQDESADDDG. A compositionally biased stretch (low complexity) spans 827 to 851; that stretch reads RSSSGTVSNSTTTTTTATTTSSKST. The segment at 856-875 adopts a C2H2-type 3; degenerate zinc-finger fold; that stretch reads FTCEHCARQLCSMSNLKRHR. Disordered regions lie at residues 882–905, 975–1069, 1083–1227, and 1246–1273; these read ASSS…TAPA, GDAL…EHKN, RMDA…SPLD, and PGPL…SQQA. Composition is skewed to low complexity over residues 981–1015, 1023–1046, and 1108–1131; these read QQHQ…AGRI, ILNQ…MLNP, and PQRS…YQVQ. Pro residues predominate over residues 1136–1146; the sequence is PLPPMQLPPLQ. Over residues 1147–1185 the composition is skewed to low complexity; that stretch reads NPHNQQQQHQMLHQSQMNYQQVQQVQQVQHVQQQQNLQN. Polar residues-rich tracts occupy residues 1201–1211 and 1251–1273; these read APGNRSRSHSN and QGQS…SQQA. The C2H2-type 4 zinc finger occupies 1274–1297; it reads YICPECKKTYASRKNVKRHRMAVH. Disordered stretches follow at residues 1333-1478, 1569-1608, 1624-1671, and 1769-1822; these read TPDS…ADEE, SVGL…QQQQ, HPPM…LTCS, and ADRQ…PSTN. Over residues 1388-1403 the composition is skewed to basic and acidic residues; the sequence is ERQEPPKKPVADDHKS. Composition is skewed to pro residues over residues 1407 to 1421 and 1429 to 1445; these read PLPP…PPPY and LNPP…PPLQ. A compositionally biased stretch (low complexity) spans 1589 to 1608; the sequence is QHPQQHPQQHPQQHPQQQQQ. The span at 1624–1633 shows a compositional bias: polar residues; sequence HPPMPVSQQF. A C2H2-type 5; degenerate zinc finger spans residues 1668 to 1694; the sequence is LTCSGCKKILGSDYSLRRHRAGCADVQ. The segment covering 1800-1811 has biased composition (low complexity); sequence SSSSSSSTSSAS. The segment at 1826-1858 adopts a C2H2-type 6 zinc-finger fold; the sequence is HYCQFPECGKNFSSEWNLARHTRESCKMTTRAH.

Expressed in seam cells, intestine cells, pharyngeal muscles and nerve ring neurons.

It localises to the nucleus. It is found in the cytoplasm. In terms of biological role, RNA-binding protein, which regulates the expression of proteins required to control developmental timing of events during the L2 to L3 larval stage switch. Binds to the 3'UTR of the transcript of the heterochronic protein lin-28 to post-transcriptionally negatively regulate its expression in certain tissue types in the later larval stages. During larval development, controls the timing of seam cell division and terminal differentiation into adult alae. In vitro, it can also bind to DNA through its first zinc finger. May bind directly or indirectly to the promoter of the sex-determining factor xol-1 to activate its transcription. Its activation of xol-1 transcription controls sex determination and X chromosome dosage compensation to promote male development. Through the negative regulation of lin-28 transcript, it also has a role in the fox-1-sex-1-mediated determination of sexual fate. Acts in the intestine to play a role in regulating adult lifespan. In Caenorhabditis elegans, this protein is Signal element on autosome protein 2.